Here is a 335-residue protein sequence, read N- to C-terminus: Eukaryotic translation initiation factor 3 subunit I (335 aa).

WD repeat units lie at residues 8–47 (GHER…RLGT), 50–91 (GHQG…KTWD), 145–184 (CAES…LLFN), 189–228 (EPDL…VMKT), and 286–325 (GHFG…FDFT).

It belongs to the eIF-3 subunit I family. In terms of assembly, component of the eukaryotic translation initiation factor 3 (eIF-3) complex.

It is found in the cytoplasm. Functionally, component of the eukaryotic translation initiation factor 3 (eIF-3) complex, which is involved in protein synthesis of a specialized repertoire of mRNAs and, together with other initiation factors, stimulates binding of mRNA and methionyl-tRNAi to the 40S ribosome. The eIF-3 complex specifically targets and initiates translation of a subset of mRNAs involved in cell proliferation. The chain is Eukaryotic translation initiation factor 3 subunit I (tif34) from Botryotinia fuckeliana (strain B05.10) (Noble rot fungus).